We begin with the raw amino-acid sequence, 543 residues long: MILREWRRFYTIGSVLLRHGLDELIPRHWQPWPVRLFRRSLFWLRNRYPEQSRGARLRHAFEGLGPVFIKFGQMLSTRRDLLPPDLAEELAMLQDRVPSFDGQLAREQIEQALGQPIEALFADFDQQPLASASVAQVHTARLKENNAEIVIKVIRPDIKPVINDDIRLMRLCAKIVAFLIPNNRLRPVEVIEEYRRTLLDELNLMSEAANAIQLRRNFENSSHLYVPLVYSDYCRESVLVMERIYGIPVSDRAALEANGTDLKLLAERGVEVFFTQVFRDSFFHADMHPGNVFVSYEHPHDPQWIGIDCGIVGTLNRQDKRYLAENFLAFFNRDYRKVAELHVQSGWVPPDTKVEEFESALRTVLEPIFAKPLAEISFGQVLLNLFNTARRFNMHVQPQLVLLQKTLLYIEGLGRHLYPQLDLWQTAKPFLEHWMRQQIGPKAAWRAIKEKAPFWAEKLPDMPDLIYDTLTQVQHQQHMVKGLYQQYHQQHRRHAQARFLLGAGATLLLGSILLLPTHEQLASAGLTISIICWLNGWWKISRR.

The 378-residue stretch at 123-500 (DFDQQPLASA…HRRHAQARFL (378 aa)) folds into the Protein kinase domain. Residues 129 to 137 (LASASVAQV) and Lys-152 each bind ATP. The active-site Proton acceptor is the Asp-286. The next 2 membrane-spanning stretches (helical) occupy residues 499–519 (FLLGAGATLLLGSILLLPTHE) and 521–541 (LASAGLTISIICWLNGWWKIS).

It belongs to the ABC1 family. UbiB subfamily.

Its subcellular location is the cell inner membrane. It functions in the pathway cofactor biosynthesis; ubiquinone biosynthesis [regulation]. Its function is as follows. Is probably a protein kinase regulator of UbiI activity which is involved in aerobic coenzyme Q (ubiquinone) biosynthesis. This is Probable protein kinase UbiB from Tolumonas auensis (strain DSM 9187 / NBRC 110442 / TA 4).